Reading from the N-terminus, the 1359-residue chain is MAHVSFKSKEADSMSRWSKYLSTEESPPSASLSWRAMGVDGPQGSASGQKHLQMEPVVQLSKVAEGLLAKMYRLNSILDYPDPNAHTFSEAFWKAGVMPNFPKICITLSKKFPEHPNKLQLEKVDKFALDALNENAEGYMQNLEQWITLLLDLLEFREQALRLILDLSSTVITLLPHQNSLILHAFMDLFCSFVRVNLFSDKIPRKMILQVYNILHIMLKGGRDCEFYHRLVQFVDLYDPPVKGLHEDLNFVSPRIGEVLEAVGPIIFLSTDTKKLRNEGFLSPFHPRYPDILTNSAHPMRAQDLANVTSYREWVLLGYLVCPDELLRVTSIDVAMVVLKENLVLSLFRDEYILLHENYQLYVLPKVLESKRMAKSGRTKQKEADLEYNVAKQVEKMLMEVHEQALVSADALHHERRILLKQEIGRMVLFFTDQPSLLAPNIQMVFSALALAQCEVVWYFQHVGIASSKSSRGRTVDIDAADPTIGFLLDGMGKLCCLVRKYIAAIKGYALSYLSSCAGRIRFLLGTPGMVALDLDATLKGLFQQVLHCLENIPKPQGENVPAITCDLTDLRKHWLSILMIVTSSRSSVNIRHLEKATVSTGKEGLVSEGNAAYNWSRCVDELEGQLSKHGSLKKLYFYHQHLTTVFRNTMFGPEGRPQHCCAWLGAACCFPECASSIIPEEVNKIGRDSISYVESLIESIMGGLEGLINILDSEGGFGSLEMQLSPEQAAIRLNNATRAKAVSGLLAPGHESYPDNSSSVKMLEAAMQRLTSLCSVLNDMEPICVLNHVFILREYMRDCIIGNFRRRFHSMIRTDSCLQRPSVIESLLRRHLSIIHLAEQHISMDLTEGIREVLLAESFTGPFPNLQVFETPTETHGGGSAIDIISNWYIDNFVKDASRTGVVFDASQNCFRSSQPIGGGYLAEAFTDKRELKALVRLFGGYGVDRLDKLLREHTSALLNCIDSALRSNRDALEGLAGSVNSGDRIERDANLKQIIDIETLADFCIQAGQAITFRRLLVEAVGAVLEEKVPLIYSLLKGLAMQLPEEVPDKNEIIRLRRVASSVGVGDKHDAEWVHSILAEIGSANDNSWTLLPYLCAAFMASNMWSTTAYDVNTGGFSNNLHCLARCVSAVVGGSEYTRMEREHRRSSLSNGHMDELQEPELLSRVSAEANIKSAMQLYVKLSAGLVLDSWNDTSRPYIVPKLIFLDQLCEMSPYLPRSTLEVHIPYTILRSIYHQLYGASLMATEPMEPSPRQSPLISLAHASPSMKQNRADTTPRSHTFEPGYHSSSGSQYDEGYEGDRRTGERQLRSMRRSGPLDYTGTRKVKFVEGSSSGSHGAGSGSLQRFAVSRSGPLSYK.

Positions 1267–1359 are disordered; it reads PSMKQNRADT…VSRSGPLSYK (93 aa). Composition is skewed to basic and acidic residues over residues 1272–1282 and 1300–1310; these read NRADTTPRSHT and EGDRRTGERQL.

The protein belongs to the HEM-1/HEM-2 family. Binds PIR.

Involved in regulation of actin and microtubule organization. Part of a WAVE complex that activates the Arp2/3 complex. This Oryza sativa subsp. japonica (Rice) protein is Probable protein NAP1 (NAP1).